We begin with the raw amino-acid sequence, 398 residues long: ATP-dependent RNA helicase eIF4A (398 aa).

A Q motif motif is present at residues 25-53 (DSFDSMELKPELLRGIYAYGFERPSAIQQ). The Helicase ATP-binding domain occupies 56-226 (ILPIIKGNDV…TKFMRDPVRI (171 aa)). ATP is bound at residue 69–76 (AQSGTGKT). A DEAD box motif is present at residues 174-177 (DEAD). Residues 237–398 (GIKQFYIAVE…EMPMNVADLI (162 aa)) form the Helicase C-terminal domain.

It belongs to the DEAD box helicase family. eIF4A subfamily. As to quaternary structure, component of the eIF4F complex, which composition varies with external and internal environmental conditions. It is composed of at least eIF4A, eIF4E and eIF4G.

Its subcellular location is the cytoplasm. It carries out the reaction ATP + H2O = ADP + phosphate + H(+). Functionally, ATP-dependent RNA helicase which is a subunit of the eIF4F complex involved in cap recognition and is required for mRNA binding to ribosome. In the current model of translation initiation, eIF4A unwinds RNA secondary structures in the 5'-UTR of mRNAs which is necessary to allow efficient binding of the small ribosomal subunit, and subsequent scanning for the initiator codon. This chain is ATP-dependent RNA helicase eIF4A (tif1), found in Neosartorya fischeri (strain ATCC 1020 / DSM 3700 / CBS 544.65 / FGSC A1164 / JCM 1740 / NRRL 181 / WB 181) (Aspergillus fischerianus).